A 466-amino-acid polypeptide reads, in one-letter code: Asparagine--tRNA ligase (466 aa).

The protein belongs to the class-II aminoacyl-tRNA synthetase family. As to quaternary structure, homodimer.

The protein localises to the cytoplasm. It catalyses the reaction tRNA(Asn) + L-asparagine + ATP = L-asparaginyl-tRNA(Asn) + AMP + diphosphate + H(+). This is Asparagine--tRNA ligase from Myxococcus xanthus (strain DK1622).